The sequence spans 438 residues: MAAPVNNPDHGFCRDCLTFQRSETRRCERCGSPRLARHPELYRLHLAHIDCDAFYAAIEKRDNPALKDKPLIIGGGKRGVVSTACYIARIRGVRSAMPMFKALEACPEAVVIPPNMEKYVRVGREVRAMMQTLTPLVEPLSIDEAFLDFAGTERLHGQPPAVVLARFALAVEKEIGITVSAGLSYCKFLAKIASDFRKPRGFSVIGEAEAVGFLATKPVTMIWGVGKAFNATLERDGIRTIGQLQTMERGDLMRRYGVMGDRLYRLSRGEDVRRVDPDQDAKSVSAETTFDTDIASLDELVSVLRGLSEKVSARLKKSGIAGRTVVLKLKTQDFKLRTRNRQLGDPTRLADRIFQAGVELLRKETDGTKFRLLGIGVSDLSDDDKADPPDLVDVQSRKRAMAEGAIDALRDKFGRKAVETGYTFGRGRDAHPPEPLED.

Residues leucine 46–glycine 226 form the UmuC domain. 2 residues coordinate Mg(2+): aspartate 50 and aspartate 143. The active site involves glutamate 144.

The protein belongs to the DNA polymerase type-Y family. In terms of assembly, monomer. It depends on Mg(2+) as a cofactor.

It localises to the cytoplasm. It carries out the reaction DNA(n) + a 2'-deoxyribonucleoside 5'-triphosphate = DNA(n+1) + diphosphate. Functionally, poorly processive, error-prone DNA polymerase involved in untargeted mutagenesis. Copies undamaged DNA at stalled replication forks, which arise in vivo from mismatched or misaligned primer ends. These misaligned primers can be extended by PolIV. Exhibits no 3'-5' exonuclease (proofreading) activity. May be involved in translesional synthesis, in conjunction with the beta clamp from PolIII. This chain is DNA polymerase IV 1 (dinB1), found in Mesorhizobium japonicum (strain LMG 29417 / CECT 9101 / MAFF 303099) (Mesorhizobium loti (strain MAFF 303099)).